We begin with the raw amino-acid sequence, 224 residues long: Urease accessory protein UreF (224 aa).

This sequence belongs to the UreF family. As to quaternary structure, ureD, UreF and UreG form a complex that acts as a GTP-hydrolysis-dependent molecular chaperone, activating the urease apoprotein by helping to assemble the nickel containing metallocenter of UreC. The UreE protein probably delivers the nickel.

The protein localises to the cytoplasm. Its function is as follows. Required for maturation of urease via the functional incorporation of the urease nickel metallocenter. This Klebsiella pneumoniae (strain 342) protein is Urease accessory protein UreF.